The sequence spans 539 residues: Phosphoenolpyruvate carboxykinase (ATP) (539 aa).

3 residues coordinate substrate: Arg-64, Tyr-206, and Lys-212. ATP is bound by residues Lys-212, His-231, and Gly-247 to Thr-255. Residues Lys-212 and His-231 each contribute to the Mn(2+) site. A Mn(2+)-binding site is contributed by Asp-268. Residues Glu-296, Arg-332, Arg-448–Ile-449, and Thr-454 contribute to the ATP site. A substrate-binding site is contributed by Arg-332.

This sequence belongs to the phosphoenolpyruvate carboxykinase (ATP) family. In terms of assembly, monomer. Requires Mn(2+) as cofactor.

Its subcellular location is the cytoplasm. The enzyme catalyses oxaloacetate + ATP = phosphoenolpyruvate + ADP + CO2. Its pathway is carbohydrate biosynthesis; gluconeogenesis. Its function is as follows. Involved in the gluconeogenesis. Catalyzes the conversion of oxaloacetate (OAA) to phosphoenolpyruvate (PEP) through direct phosphoryl transfer between the nucleoside triphosphate and OAA. In Salmonella gallinarum (strain 287/91 / NCTC 13346), this protein is Phosphoenolpyruvate carboxykinase (ATP).